A 1482-amino-acid chain; its full sequence is Lysine-specific demethylase rbr-2 (1482 aa).

Residues 1–45 (MRGRRQEDIATTSSAPSTSTSHKKKTVSSNGSFRPRTQSNPGGKM) are disordered. The span at 11-20 (TTSSAPSTST) shows a compositional bias: low complexity. The span at 30–41 (NGSFRPRTQSNP) shows a compositional bias: polar residues. One can recognise a JmjN domain in the interval 61–102 (APVYYPTSEEFADPIEYVAKIRPDAERYGVVKIVPPSDFKPP). In terms of domain architecture, ARID spans 126–223 (VKEKHTFIER…HIEPFNRNLK (98 aa)). The segment at 244-316 (YQHHHGTMRS…SKTEEDEEEN (73 aa)) is disordered. Basic and acidic residues predominate over residues 251–264 (MRSEPENTDGKNTE). Basic residues predominate over residues 277–288 (GRRRSKNKKPVP). A PHD-type 1 zinc finger spans residues 322–374 (QVYCVSCNEGKDEDLLLLCDIEGCNSGRHTYCCDPVLDEVPEGEWRCPKCIES). The JmjC domain occupies 471-637 (QYANHAWNLN…KGRECVQSYS (167 aa)). Residues His517, Asp520, and His605 each contribute to the Fe cation site. The segment at 1206–1260 (LEGCCCLGGNKSDSSESVLSCIMCESQFHVRCCEWSTFFQHLPKGCFMCVRCLRG) adopts a PHD-type 2 zinc-finger fold. Residues 1361–1403 (QQRPVKSKPSASLFDPKLNSKRKRPNPSQKDSSKSKSRKRQGQ) form a disordered region. A PHD-type 3 zinc finger spans residues 1416–1471 (FKSCQARSCLKPFGDSVNWVMCDAGCKNWFHVICVGFTLREINDMHEYRCSSCLDH).

Belongs to the JARID1 histone demethylase family. It depends on Fe(2+) as a cofactor.

It localises to the nucleus. The enzyme catalyses N(6),N(6),N(6)-trimethyl-L-lysyl(4)-[histone H3] + 3 2-oxoglutarate + 3 O2 = L-lysyl(4)-[histone H3] + 3 formaldehyde + 3 succinate + 3 CO2. Functionally, histone demethylase that specifically demethylates 'Lys-4' of histone H3, thereby playing a central role in histone code. Does not demethylate histone H3 'Lys-9', H3 'Lys-27', H3 'Lys-36', H3 'Lys-79' or H4 'Lys-20'. Demethylates trimethylated and dimethylated but not monomethylated H3 'Lys-4'. Involved in larval development and vulva formation. This Caenorhabditis briggsae protein is Lysine-specific demethylase rbr-2 (rbr-2).